A 377-amino-acid chain; its full sequence is Palmitoyltransferase ZDHHC16 (377 aa).

The Cytoplasmic portion of the chain corresponds to 1–77 (MRGQRSLLLG…VYWLVDNVIR (77 aa)). The helical transmembrane segment at 78–98 (WFGVVFVVLVIVLTGSIVAIA) threads the bilayer. The Lumenal portion of the chain corresponds to 99 to 116 (YLCVLPLILRTYSVPRLC). Residues 117-137 (WHFFYSHWNLILIVFHYYQAI) traverse the membrane as a helical segment. Over 138-198 (TTPPGYPPQG…NNCVGHYNHR (61 aa)) the chain is Cytoplasmic. The DHHC domain maps to 155 to 205 (SICKKCIYPKPARTHHCSICNRCVLKMDHHCPWLNNCVGHYNHRYFFSFCF). Cys185 functions as the S-palmitoyl cysteine intermediate in the catalytic mechanism. Residues 199-219 (YFFSFCFFMTLGCVYCSYGSW) form a helical membrane-spanning segment. Topologically, residues 220–266 (DLFREAYAAIEKMKQLDKNKLQAVANQTYHQTPPPIFSFRERMTHKS) are lumenal. Residues 267 to 287 (LVYLWFLCSSVALALGALTVW) form a helical membrane-spanning segment. At 288 to 377 (HAVLISRGET…TAHSASVMAV (90 aa)) the chain is on the cytoplasmic side.

The protein belongs to the DHHC palmitoyltransferase family. Interacts with ABL1. Interacts with COPS5/JAB1.

It localises to the endoplasmic reticulum membrane. It catalyses the reaction L-cysteinyl-[protein] + hexadecanoyl-CoA = S-hexadecanoyl-L-cysteinyl-[protein] + CoA. Its function is as follows. Palmitoyl acyltransferase that mediates palmitoylation of proteins such as PLN and ZDHHC6. Required during embryonic heart development and cardiac function, possibly by mediating palmitoylation of PLN, thereby affecting PLN phosphorylation and homooligomerization. Also required for eye development. Palmitoylates ZDHHC6, affecting the quaternary assembly of ZDHHC6, its localization, stability and function. May play a role in DNA damage response. May be involved in apoptosis regulation. Involved in the proliferation of neural stem cells by regulating the FGF/ERK pathway. This is Palmitoyltransferase ZDHHC16 from Macaca fascicularis (Crab-eating macaque).